The following is a 977-amino-acid chain: Alanine--tRNA ligase (977 aa).

Positions 512-535 (SQVDSKLQSSTPAGTGSYDSKQVS) are disordered. Residues histidine 618, histidine 622, cysteine 720, and histidine 724 each coordinate Zn(2+).

The protein belongs to the class-II aminoacyl-tRNA synthetase family. It depends on Zn(2+) as a cofactor.

It is found in the cytoplasm. It catalyses the reaction tRNA(Ala) + L-alanine + ATP = L-alanyl-tRNA(Ala) + AMP + diphosphate. In terms of biological role, catalyzes the attachment of alanine to tRNA(Ala) in a two-step reaction: alanine is first activated by ATP to form Ala-AMP and then transferred to the acceptor end of tRNA(Ala). Also edits incorrectly charged Ser-tRNA(Ala) and Gly-tRNA(Ala) via its editing domain. The sequence is that of Alanine--tRNA ligase from Leptospira interrogans serogroup Icterohaemorrhagiae serovar Lai (strain 56601).